The chain runs to 642 residues: Bifunctional protein glk (642 aa).

The interval Met-1–Ser-340 is glucokinase. Ala-23–Thr-28 lines the ATP pocket. Residues Ser-341–Thr-417 enclose the HTH rpiR-type domain. Residues Ser-341–Asp-642 are putative HTH-type transcriptional regulator. The segment at residues Ile-377 to Arg-396 is a DNA-binding region (H-T-H motif). One can recognise an SIS domain in the interval Ala-461–Ser-600. The chain crosses the membrane as a helical span at residues Ser-576–Ile-596.

In the N-terminal section; belongs to the bacterial glucokinase family.

Its subcellular location is the membrane. It catalyses the reaction D-glucose + ATP = D-glucose 6-phosphate + ADP + H(+). The polypeptide is Bifunctional protein glk (glk) (Burkholderia orbicola (strain AU 1054)).